A 103-amino-acid chain; its full sequence is Co-chaperonin GroES (103 aa).

Belongs to the GroES chaperonin family. In terms of assembly, heptamer of 7 subunits arranged in a ring. Interacts with the chaperonin GroEL.

It localises to the cytoplasm. Functionally, together with the chaperonin GroEL, plays an essential role in assisting protein folding. The GroEL-GroES system forms a nano-cage that allows encapsulation of the non-native substrate proteins and provides a physical environment optimized to promote and accelerate protein folding. GroES binds to the apical surface of the GroEL ring, thereby capping the opening of the GroEL channel. The protein is Co-chaperonin GroES of Nostoc punctiforme (strain ATCC 29133 / PCC 73102).